Here is a 583-residue protein sequence, read N- to C-terminus: Aspartate--tRNA ligase (583 aa).

Residue Glu174 participates in L-aspartate binding. The aspartate stretch occupies residues 198–201 (QITK). Arg220 is a binding site for L-aspartate. ATP-binding positions include 220 to 222 (RDE) and Gln229. L-aspartate is bound at residue His443. Glu477 contacts ATP. Arg484 contacts L-aspartate. 529-532 (GLDR) contributes to the ATP binding site.

The protein belongs to the class-II aminoacyl-tRNA synthetase family. Type 1 subfamily. Homodimer.

It is found in the cytoplasm. It carries out the reaction tRNA(Asp) + L-aspartate + ATP = L-aspartyl-tRNA(Asp) + AMP + diphosphate. Functionally, catalyzes the attachment of L-aspartate to tRNA(Asp) in a two-step reaction: L-aspartate is first activated by ATP to form Asp-AMP and then transferred to the acceptor end of tRNA(Asp). This Streptococcus agalactiae serotype V (strain ATCC BAA-611 / 2603 V/R) protein is Aspartate--tRNA ligase.